The following is a 325-amino-acid chain: Protease HtpX homolog (325 aa).

The helical transmembrane segment at 20–40 (IGYLLGGGGGMMIALVIAVAM) threads the bilayer. H130 contributes to the Zn(2+) binding site. Residue E131 is part of the active site. H134 is a binding site for Zn(2+). The next 2 helical transmembrane spans lie at 145–165 (IVATLAGAISMLGNFAFFLGG) and 173–193 (VMGVVGTLLAMIVAPFGAMIV). E202 lines the Zn(2+) pocket. Residues 286–325 (SAAMTARAAAPSQNSGPWGQRSDNAGGNSNGGSRYRGPWS) are disordered. Positions 306–325 (RSDNAGGNSNGGSRYRGPWS) are enriched in low complexity.

This sequence belongs to the peptidase M48B family. Requires Zn(2+) as cofactor.

The protein resides in the cell inner membrane. This chain is Protease HtpX homolog, found in Brucella melitensis biotype 2 (strain ATCC 23457).